A 193-amino-acid chain; its full sequence is dCTP deaminase (193 aa).

Residues 110–115 (RSSLAR), Asp-128, 136–138 (VLE), Tyr-171, Lys-178, and Gln-182 contribute to the dCTP site. Residue Glu-138 is the Proton donor/acceptor of the active site. The interval 170-193 (PYNSRQDAKYRGQQGAVASRIDKD) is disordered.

It belongs to the dCTP deaminase family. In terms of assembly, homotrimer.

The enzyme catalyses dCTP + H2O + H(+) = dUTP + NH4(+). Its pathway is pyrimidine metabolism; dUMP biosynthesis; dUMP from dCTP (dUTP route): step 1/2. Functionally, catalyzes the deamination of dCTP to dUTP. The chain is dCTP deaminase from Yersinia enterocolitica serotype O:8 / biotype 1B (strain NCTC 13174 / 8081).